A 345-amino-acid polypeptide reads, in one-letter code: Phosphoribosylformylglycinamidine cyclo-ligase (345 aa).

Belongs to the AIR synthase family.

It is found in the cytoplasm. It carries out the reaction 2-formamido-N(1)-(5-O-phospho-beta-D-ribosyl)acetamidine + ATP = 5-amino-1-(5-phospho-beta-D-ribosyl)imidazole + ADP + phosphate + H(+). It participates in purine metabolism; IMP biosynthesis via de novo pathway; 5-amino-1-(5-phospho-D-ribosyl)imidazole from N(2)-formyl-N(1)-(5-phospho-D-ribosyl)glycinamide: step 2/2. The polypeptide is Phosphoribosylformylglycinamidine cyclo-ligase (Shewanella amazonensis (strain ATCC BAA-1098 / SB2B)).